The primary structure comprises 550 residues: Arginine--tRNA ligase (550 aa).

The 'HIGH' region motif lies at alanine 130–glycine 140.

The protein belongs to the class-I aminoacyl-tRNA synthetase family. Monomer.

Its subcellular location is the cytoplasm. The enzyme catalyses tRNA(Arg) + L-arginine + ATP = L-arginyl-tRNA(Arg) + AMP + diphosphate. This Mycobacterium ulcerans (strain Agy99) protein is Arginine--tRNA ligase.